Here is a 308-residue protein sequence, read N- to C-terminus: Protein translocase subunit SecF (308 aa).

6 consecutive transmembrane segments (helical) span residues 28 to 48, 140 to 160, 164 to 184, 194 to 214, 246 to 266, and 272 to 292; these read SIIL…NFGI, IEAG…YIWV, WYFG…ALGF, LSTI…SVVI, ILTV…GGEA, and VLVF…SAPI.

This sequence belongs to the SecD/SecF family. SecF subfamily. As to quaternary structure, forms a complex with SecD. Part of the essential Sec protein translocation apparatus which comprises SecA, SecYEG and auxiliary proteins SecDF-YajC and YidC.

The protein localises to the cell inner membrane. Functionally, part of the Sec protein translocase complex. Interacts with the SecYEG preprotein conducting channel. SecDF uses the proton motive force (PMF) to complete protein translocation after the ATP-dependent function of SecA. This Rickettsia felis (strain ATCC VR-1525 / URRWXCal2) (Rickettsia azadi) protein is Protein translocase subunit SecF.